Reading from the N-terminus, the 404-residue chain is Sulfate adenylyltransferase (404 aa).

It belongs to the sulfate adenylyltransferase family.

It carries out the reaction sulfate + ATP + H(+) = adenosine 5'-phosphosulfate + diphosphate. It participates in sulfur metabolism; hydrogen sulfide biosynthesis; sulfite from sulfate: step 1/3. The sequence is that of Sulfate adenylyltransferase from Chlorobaculum tepidum (strain ATCC 49652 / DSM 12025 / NBRC 103806 / TLS) (Chlorobium tepidum).